We begin with the raw amino-acid sequence, 1370 residues long: DNA-directed RNA polymerase subunit beta (1370 aa).

The protein belongs to the RNA polymerase beta chain family. The RNAP catalytic core consists of 2 alpha, 1 beta, 1 beta' and 1 omega subunit. When a sigma factor is associated with the core the holoenzyme is formed, which can initiate transcription.

It catalyses the reaction RNA(n) + a ribonucleoside 5'-triphosphate = RNA(n+1) + diphosphate. DNA-dependent RNA polymerase catalyzes the transcription of DNA into RNA using the four ribonucleoside triphosphates as substrates. This chain is DNA-directed RNA polymerase subunit beta, found in Geobacter metallireducens (strain ATCC 53774 / DSM 7210 / GS-15).